The primary structure comprises 248 residues: MSFVVIIPARFASTRLPGKPLLDINGKPMIVHVLERARESGAERIIVATDHEDVARAVEAAGGEVCMTRADHQSGTERLAEVVEKCGFSDDTVIVNVQGDEPMIPAVIIRQVAENLAQRQVGMATLAAPVHSAEEAFNPNVVKVVLDSEGYALYFSRATIPWDRDRFAKGLETVGDNFLRHLGIYGYRAGFIRRYVNWQPSPLEHIEMLEQLRVLWYGEKIHVAVAEQVPGTGVDTAEDLERVRAEMR.

Belongs to the KdsB family.

It localises to the cytoplasm. It catalyses the reaction 3-deoxy-alpha-D-manno-oct-2-ulosonate + CTP = CMP-3-deoxy-beta-D-manno-octulosonate + diphosphate. Its pathway is nucleotide-sugar biosynthesis; CMP-3-deoxy-D-manno-octulosonate biosynthesis; CMP-3-deoxy-D-manno-octulosonate from 3-deoxy-D-manno-octulosonate and CTP: step 1/1. It participates in bacterial outer membrane biogenesis; lipopolysaccharide biosynthesis. Functionally, activates KDO (a required 8-carbon sugar) for incorporation into bacterial lipopolysaccharide in Gram-negative bacteria. This chain is 3-deoxy-manno-octulosonate cytidylyltransferase, found in Escherichia fergusonii (strain ATCC 35469 / DSM 13698 / CCUG 18766 / IAM 14443 / JCM 21226 / LMG 7866 / NBRC 102419 / NCTC 12128 / CDC 0568-73).